The sequence spans 355 residues: UDP-N-acetylglucosamine--N-acetylmuramyl-(pentapeptide) pyrophosphoryl-undecaprenol N-acetylglucosamine transferase (355 aa).

UDP-N-acetyl-alpha-D-glucosamine-binding positions include T12–G14, N124, R160, S192, I243, A262–E267, and Q287.

The protein belongs to the glycosyltransferase 28 family. MurG subfamily.

It localises to the cell inner membrane. It catalyses the reaction di-trans,octa-cis-undecaprenyl diphospho-N-acetyl-alpha-D-muramoyl-L-alanyl-D-glutamyl-meso-2,6-diaminopimeloyl-D-alanyl-D-alanine + UDP-N-acetyl-alpha-D-glucosamine = di-trans,octa-cis-undecaprenyl diphospho-[N-acetyl-alpha-D-glucosaminyl-(1-&gt;4)]-N-acetyl-alpha-D-muramoyl-L-alanyl-D-glutamyl-meso-2,6-diaminopimeloyl-D-alanyl-D-alanine + UDP + H(+). Its pathway is cell wall biogenesis; peptidoglycan biosynthesis. In terms of biological role, cell wall formation. Catalyzes the transfer of a GlcNAc subunit on undecaprenyl-pyrophosphoryl-MurNAc-pentapeptide (lipid intermediate I) to form undecaprenyl-pyrophosphoryl-MurNAc-(pentapeptide)GlcNAc (lipid intermediate II). The chain is UDP-N-acetylglucosamine--N-acetylmuramyl-(pentapeptide) pyrophosphoryl-undecaprenol N-acetylglucosamine transferase from Haemophilus ducreyi (strain 35000HP / ATCC 700724).